A 644-amino-acid chain; its full sequence is Chaperone protein DnaK (644 aa).

2 disordered regions span residues 490-533 (QEEA…ELDD) and 570-644 (EELQ…EDDA). Residues 492 to 513 (EAEKHKEEDEARRERIEARNEA) show a composition bias toward basic and acidic residues. The span at 523 to 533 (LLEENEEELDD) shows a compositional bias: acidic residues. Gly residues predominate over residues 588 to 622 (GPGGAGGAAGAGPGGMGGMGGAAGPGGAGGAGPGG). Over residues 624–644 (DADDEEYVDADFEDVDDEDDA) the composition is skewed to acidic residues.

The protein belongs to the heat shock protein 70 family.

In terms of biological role, acts as a chaperone. The polypeptide is Chaperone protein DnaK (Halorubrum lacusprofundi (strain ATCC 49239 / DSM 5036 / JCM 8891 / ACAM 34)).